Reading from the N-terminus, the 899-residue chain is Plasma membrane ATPase (899 aa).

A disordered region spans residues 1-72; that stretch reads MSAATEPTKE…TDPSYGLTSD (72 aa). Residues 1–96 are Cytoplasmic-facing; it reads MSAATEPTKE…SEETENLFVK (96 aa). Residues 17-29 are compositionally biased toward acidic residues; that stretch reads DSDDEDEDIDQLI. Residues 97–117 form a helical membrane-spanning segment; the sequence is FLMFFIGPIQFVMEAAAILAA. Topologically, residues 118 to 121 are extracellular; it reads GLED. The helical transmembrane segment at 122–141 threads the bilayer; the sequence is WVDFGVICGLLFLNAAVGFI. Residues 142 to 272 are Cytoplasmic-facing; it reads QEYQAGSIVD…GSGHFTEVLN (131 aa). Residues 273 to 294 traverse the membrane as a helical segment; that stretch reads GIGTILLILVIVTLLLVWVASF. Residues 295–305 lie on the Extracellular side of the membrane; sequence YRTNKIVRILR. Residues 306–328 form a helical membrane-spanning segment; it reads YTLAITIVGVPVGLPAVVTTTMA. The Cytoplasmic portion of the chain corresponds to 329 to 700; sequence VGAAYLAKKQ…IAILNRSLNI (372 aa). Residue D359 is the 4-aspartylphosphate intermediate of the active site. Mg(2+)-binding residues include D615 and D619. A helical transmembrane segment spans residues 701 to 719; the sequence is DLVVFIAIFADVATLAIAY. The Extracellular segment spans residues 720-735; sequence DNAPYSPKPVKWNLRR. A helical membrane pass occupies residues 736–755; the sequence is LWGMSVILGIILAIGTWITL. Topologically, residues 756 to 805 are cytoplasmic; the sequence is TTMFVPKGGIIQNFGSIDGVLFLQISLTENWLIFITRAAGPFWSSIPSWQ. A helical membrane pass occupies residues 806-826; that stretch reads LSGAVLIVDIIATMFCLFGWW. Topologically, residues 827–838 are extracellular; it reads SQNWNDIVTVVR. A helical membrane pass occupies residues 839-855; the sequence is VWIFSFGVFCVMGGAYY. Residues 856-899 are Cytoplasmic-facing; that stretch reads MMSESEAFDRFMNGKSRRDKPSGRSVEDFLMAMQRVSTQHEKEN.

It belongs to the cation transport ATPase (P-type) (TC 3.A.3) family. Type IIIA subfamily.

It is found in the cell membrane. It carries out the reaction ATP + H2O + H(+)(in) = ADP + phosphate + 2 H(+)(out). With respect to regulation, activated by high pH or also by potassium ions when the medium pH is low. In terms of biological role, the plasma membrane ATPase of plants and fungi is a hydrogen ion pump. The proton gradient it generates drives the active transport of nutrients by H(+)-symport. The resulting external acidification and/or internal alkinization may mediate growth responses. The polypeptide is Plasma membrane ATPase (PMA1) (Kluyveromyces lactis (strain ATCC 8585 / CBS 2359 / DSM 70799 / NBRC 1267 / NRRL Y-1140 / WM37) (Yeast)).